We begin with the raw amino-acid sequence, 138 residues long: Large ribosomal subunit protein uL16 (138 aa).

Basic residues predominate over residues 1-13 (MLQPARRKYRKEQ). Residues 1-21 (MLQPARRKYRKEQKGRNTGIA) form a disordered region.

This sequence belongs to the universal ribosomal protein uL16 family. In terms of assembly, part of the 50S ribosomal subunit.

In terms of biological role, binds 23S rRNA and is also seen to make contacts with the A and possibly P site tRNAs. This is Large ribosomal subunit protein uL16 from Albidiferax ferrireducens (strain ATCC BAA-621 / DSM 15236 / T118) (Rhodoferax ferrireducens).